A 384-amino-acid chain; its full sequence is Spermatogenesis-associated protein 32 (384 aa).

Residues 23–60 (RDDLSQHQIQEEQELEADMLEQKPQLQVDLDLDPDPDP) form a disordered region. Ser-167 and Ser-170 each carry phosphoserine. 3 disordered regions span residues 211–232 (DAHSAPPTTSSQAPSPLLSSDL), 284–310 (VEEREPENHAETLPEKPREARAPLKSW), and 340–366 (LLQPPATSPLLQGSKEDSVPPGKEKEN). The span at 214 to 231 (SAPPTTSSQAPSPLLSSD) shows a compositional bias: low complexity. Over residues 353–366 (SKEDSVPPGKEKEN) the composition is skewed to basic and acidic residues.

As to quaternary structure, interacts with syntaxin-1 and ACTB. Detected in testis, and on the acrosomal cap of spermatids.

This is Spermatogenesis-associated protein 32 (SPATA32) from Homo sapiens (Human).